Consider the following 142-residue polypeptide: Small ribosomal subunit protein uS9 (142 aa).

Residues Lys117–Arg142 form a disordered region. Positions Thr123–Arg142 are enriched in basic residues.

Belongs to the universal ribosomal protein uS9 family.

The protein is Small ribosomal subunit protein uS9 of Pyrobaculum aerophilum (strain ATCC 51768 / DSM 7523 / JCM 9630 / CIP 104966 / NBRC 100827 / IM2).